Consider the following 251-residue polypeptide: Phosphoribosylaminoimidazole-succinocarboxamide synthase (251 aa).

This sequence belongs to the SAICAR synthetase family.

The catalysed reaction is 5-amino-1-(5-phospho-D-ribosyl)imidazole-4-carboxylate + L-aspartate + ATP = (2S)-2-[5-amino-1-(5-phospho-beta-D-ribosyl)imidazole-4-carboxamido]succinate + ADP + phosphate + 2 H(+). The protein operates within purine metabolism; IMP biosynthesis via de novo pathway; 5-amino-1-(5-phospho-D-ribosyl)imidazole-4-carboxamide from 5-amino-1-(5-phospho-D-ribosyl)imidazole-4-carboxylate: step 1/2. This chain is Phosphoribosylaminoimidazole-succinocarboxamide synthase, found in Phenylobacterium zucineum (strain HLK1).